Consider the following 353-residue polypeptide: tRNA N6-adenosine threonylcarbamoyltransferase (353 aa).

2 residues coordinate Fe cation: H109 and H113. Residues 136–140 (TVSGG), D169, G182, D186, and N284 contribute to the substrate site. D312 contributes to the Fe cation binding site.

The protein belongs to the KAE1 / TsaD family. It depends on Fe(2+) as a cofactor.

It localises to the cytoplasm. The catalysed reaction is L-threonylcarbamoyladenylate + adenosine(37) in tRNA = N(6)-L-threonylcarbamoyladenosine(37) in tRNA + AMP + H(+). Functionally, required for the formation of a threonylcarbamoyl group on adenosine at position 37 (t(6)A37) in tRNAs that read codons beginning with adenine. Is involved in the transfer of the threonylcarbamoyl moiety of threonylcarbamoyl-AMP (TC-AMP) to the N6 group of A37, together with TsaE and TsaB. TsaD likely plays a direct catalytic role in this reaction. This chain is tRNA N6-adenosine threonylcarbamoyltransferase, found in Chlorobium phaeobacteroides (strain DSM 266 / SMG 266 / 2430).